A 503-amino-acid chain; its full sequence is Maturase K (503 aa).

Belongs to the intron maturase 2 family. MatK subfamily.

The protein resides in the plastid. It localises to the chloroplast. Functionally, usually encoded in the trnK tRNA gene intron. Probably assists in splicing its own and other chloroplast group II introns. In Aethionema cordifolium (Lebanon stonecress), this protein is Maturase K.